Reading from the N-terminus, the 167-residue chain is Small ribosomal subunit protein uS5 (167 aa).

The S5 DRBM domain maps to 19-82 (LTEKVLHINR…EAARKNMISC (64 aa)).

This sequence belongs to the universal ribosomal protein uS5 family. Part of the 30S ribosomal subunit. Contacts proteins S4 and S8.

In terms of biological role, with S4 and S12 plays an important role in translational accuracy. Located at the back of the 30S subunit body where it stabilizes the conformation of the head with respect to the body. This is Small ribosomal subunit protein uS5 from Protochlamydia amoebophila (strain UWE25).